We begin with the raw amino-acid sequence, 301 residues long: E3 ubiquitin-protein ligase RNF144B (301 aa).

The TRIAD supradomain stretch occupies residues 26–242 (PLVTCKLCLC…YDKGPCRNKL (217 aa)). Positions 30, 33, 53, 56, 121, 126, 145, 148, 153, 156, 161, 166, 191, and 194 each coordinate Zn(2+). The RING-type 1 zinc finger occupies 30–80 (CKLCLCEQSLDKMTMLQECQCIFCTPCLKQYMVLSIREGCGSPITCPDMVC). The IBR-type zinc-finger motif lies at 101-166 (QLYQRLKFER…KDAWHEESSC (66 aa)). The RING-type 2; atypical zinc-finger motif lies at 191-220 (CPVCRIYIERNEGCAQMMCKNCKHTFCWYC). The active site involves C204. The Zn(2+) site is built by C209, C212, C217, C220, H232, and C238. A helical membrane pass occupies residues 256–276 (VVGILVGLGVIALVTSPLLLL).

It belongs to the RBR family. RNF144 subfamily. Interacts with UBE2L3, UBE2L6 and LCMT2, as well as with BAX. Interacts with TBK1; this interaction inhibits TBK1 phosphorylation and 'Lys-63'-linked polyubiquitination. Auto-ubiquitinated.

It localises to the mitochondrion membrane. The protein localises to the cytoplasm. The catalysed reaction is [E2 ubiquitin-conjugating enzyme]-S-ubiquitinyl-L-cysteine + [acceptor protein]-L-lysine = [E2 ubiquitin-conjugating enzyme]-L-cysteine + [acceptor protein]-N(6)-ubiquitinyl-L-lysine.. It functions in the pathway protein modification; protein ubiquitination. Its function is as follows. E3 ubiquitin-protein ligase which accepts ubiquitin from E2 ubiquitin-conjugating enzymes UBE2L3 and UBE2L6 in the form of a thioester and then directly transfers the ubiquitin to targeted substrates such as LCMT2, thereby promoting their degradation. Induces apoptosis via a p53/TP53-dependent but caspase-independent mechanism. Plays a crucial role in maintaining the genomic stability by controlling the degradation of multiple proteins involved in mitotic progression and DNA damage. Regulates epithelial homeostasis by mediating degradation of CDKN1A and isoform 2 of TP63. Plays a regulatory role in innate immunity by negatively regulating IRF3 activation and IFN-beta production. Mechanistically, inhibits TBK1 phosphorylation and 'Lys-63'-linked polyubiquitination independently of its E3 ligase activity. Alternatively, promotes 'Lys-27' and 'Lys-33'-linked ubiquitination of IFIH1/MDA5, promoting selective autophagic degradation of IFIH1/MDA5 to inhibit antiviral response. The sequence is that of E3 ubiquitin-protein ligase RNF144B (Rnf144b) from Mus musculus (Mouse).